Consider the following 191-residue polypeptide: Orotate phosphoribosyltransferase (191 aa).

114–122 (EDVITTGGS) lines the 5-phospho-alpha-D-ribose 1-diphosphate pocket. 2 residues coordinate orotate: threonine 118 and arginine 146.

It belongs to the purine/pyrimidine phosphoribosyltransferase family. PyrE subfamily. Homodimer. Mg(2+) serves as cofactor.

It carries out the reaction orotidine 5'-phosphate + diphosphate = orotate + 5-phospho-alpha-D-ribose 1-diphosphate. It participates in pyrimidine metabolism; UMP biosynthesis via de novo pathway; UMP from orotate: step 1/2. In terms of biological role, catalyzes the transfer of a ribosyl phosphate group from 5-phosphoribose 1-diphosphate to orotate, leading to the formation of orotidine monophosphate (OMP). This chain is Orotate phosphoribosyltransferase, found in Caldicellulosiruptor saccharolyticus (strain ATCC 43494 / DSM 8903 / Tp8T 6331).